Reading from the N-terminus, the 266-residue chain is Dolichol-phosphate mannosyltransferase subunit 1 (266 aa).

Over residues 1-19 the composition is skewed to low complexity; the sequence is MASPGASRGASAATAAAAS. The interval 1–31 is disordered; sequence MASPGASRGASAATAAAASPRPPQGRSSRRD. At alanine 2 the chain carries N-acetylalanine. A Phosphoserine modification is found at serine 3. 11 residues coordinate GDP-alpha-D-mannose: proline 38, tyrosine 40, glutamate 42, isoleucine 69, aspartate 71, aspartate 124, alanine 125, aspartate 126, arginine 153, arginine 240, and lysine 246. Position 126 (aspartate 126) interacts with Mg(2+). Residue aspartate 126 participates in Mn(2+) binding.

Belongs to the glycosyltransferase 2 family. Component of the dolichol-phosphate mannose (DPM) synthase complex composed of DPM1, DPM2 and DPM3; within the complex, directly interacts with DPM3. This interaction may stabilize DPM1. Requires Mg(2+) as cofactor. The cofactor is Mn(2+). Ca(2+) is required as a cofactor.

The protein localises to the endoplasmic reticulum. The catalysed reaction is a di-trans,poly-cis-dolichyl phosphate + GDP-alpha-D-mannose = a di-trans,poly-cis-dolichyl beta-D-mannosyl phosphate + GDP. The protein operates within protein modification; protein glycosylation. In terms of biological role, transfers mannose from GDP-mannose to dolichol monophosphate to form dolichol phosphate mannose (Dol-P-Man) which is the mannosyl donor in pathways leading to N-glycosylation, glycosyl phosphatidylinositol membrane anchoring, and O-mannosylation of proteins; catalytic subunit of the dolichol-phosphate mannose (DPM) synthase complex. The sequence is that of Dolichol-phosphate mannosyltransferase subunit 1 (DPM1) from Cricetulus griseus (Chinese hamster).